Consider the following 458-residue polypeptide: MGKEKTHVNVVVIGHVDSGKSTTTGHLIYKCGGIDKRTIEKFEKEAAELGKGSFKYAWVLDKLKAERERGITIDIALWKFETPKYNVTVIDAPGHRDFIKNMITGTSQADCAILIIAGGTGEFEAGISKDGQTREHALLAFTLGFRQLIVAINKMDTTKWSQDRYNEIVKEVSGFIKKIGFNPKSVPFVPISGWHGDNMLDESTNMPWFKGWNKETKAGSKTGKTLLEAIDAIEPPVRPSDKPLRLPLQDVYKIGGIGTVPVGRVETGTIKAGMVVNFAPAAVTTEVKSVEMHHETLTEGLPGDNVGFNVKNVSVKDIRRGNVCSDSKNDPAKESASFTAQVIILNHPGQISAGYAPVLDCHTAHIACKFSELIEKIDRRSGKKMEDSPKFVKSGDSAIVKMVPSKPMCVEAYTDYPPLGRFAVRDMRQTVAVGVIKAVEKVDKAGKVTKAAAKASKK.

N,N,N-trimethylglycine is present on Gly-2. At Lys-3 the chain carries N6,N6-dimethyllysine; alternate. Lys-3 bears the N6-methyllysine; alternate mark. Residues 5–240 form the tr-type G domain; that stretch reads KTHVNVVVIG…DAIEPPVRPS (236 aa). The tract at residues 14 to 21 is G1; that stretch reads GHVDSGKS. Position 14-21 (14-21) interacts with GTP; it reads GHVDSGKS. At Lys-30 the chain carries N6-methyllysine. The segment at 70 to 74 is G2; the sequence is GITID. Position 79 is an N6,N6,N6-trimethyllysine (Lys-79). The tract at residues 91–94 is G3; the sequence is DAPG. Residues 91–95 and 153–156 each bind GTP; these read DAPGH and NKMD. Residues 153 to 156 form a G4 region; the sequence is NKMD. Positions 192–194 are G5; sequence SGW. At Lys-316 the chain carries N6,N6-dimethyllysine; alternate. N6-methyllysine; alternate is present on Lys-316. An N6-methyllysine modification is found at Lys-390.

This sequence belongs to the TRAFAC class translation factor GTPase superfamily. Classic translation factor GTPase family. EF-Tu/EF-1A subfamily.

It localises to the cytoplasm. Functionally, this protein promotes the GTP-dependent binding of aminoacyl-tRNA to the A-site of ribosomes during protein biosynthesis. This chain is Elongation factor 1-alpha (TEF-2), found in Mucor circinelloides f. lusitanicus (Mucor racemosus var. lusitanicus).